The chain runs to 414 residues: Probable cell wall biosynthesis protein LcpB (414 aa).

The segment at 1–108 (MDSPGQGEIA…PPVIAGDGGR (108 aa)) is disordered. Residues 1–120 (MDSPGQGEIA…KAISFKPRGC (120 aa)) are Cytoplasmic-facing. A compositionally biased stretch (basic and acidic residues) spans 9 to 23 (IARDSQGRPILDRYG). Over residues 33 to 42 (RQTPPTPRTP) the composition is skewed to pro residues. The span at 43-53 (PVNETRVYQPR) shows a compositional bias: low complexity. Residues 54-80 (QTPPRQTPPRQTPPRQMPPRQTPPRQV) show a composition bias toward pro residues. Residues 121–141 (LGTIAGVLAVGLVLVFVVTLW) form a helical membrane-spanning segment. The Periplasmic portion of the chain corresponds to 142–414 (ADSKLNRVDA…GAEALFSSMR (273 aa)).

The protein belongs to the LytR/CpsA/Psr (LCP) family.

The protein localises to the cell inner membrane. The protein is Probable cell wall biosynthesis protein LcpB of Corynebacterium glutamicum (strain ATCC 13032 / DSM 20300 / JCM 1318 / BCRC 11384 / CCUG 27702 / LMG 3730 / NBRC 12168 / NCIMB 10025 / NRRL B-2784 / 534).